The sequence spans 628 residues: UvrABC system protein C (628 aa).

The region spanning 21–100 (TGPGIYQFKN…IKELKPRYNV (80 aa)) is the GIY-YIG domain. Positions 214–249 (AGLLKELHEKMLTAAAELRFEEAAELKMQLQSLRRY) constitute a UVR domain.

This sequence belongs to the UvrC family. As to quaternary structure, interacts with UvrB in an incision complex.

Its subcellular location is the cytoplasm. Its function is as follows. The UvrABC repair system catalyzes the recognition and processing of DNA lesions. UvrC both incises the 5' and 3' sides of the lesion. The N-terminal half is responsible for the 3' incision and the C-terminal half is responsible for the 5' incision. This Chlorobium luteolum (strain DSM 273 / BCRC 81028 / 2530) (Pelodictyon luteolum) protein is UvrABC system protein C.